Consider the following 348-residue polypeptide: Dihydroorotase (348 aa).

Zn(2+)-binding residues include His-17 and His-19. Residues 19–21 and Asn-45 contribute to the substrate site; that span reads HLR. Zn(2+)-binding residues include Lys-103, His-140, and His-178. An N6-carboxylysine modification is found at Lys-103. His-140 contacts substrate. Leu-223 lines the substrate pocket. Asp-251 serves as a coordination point for Zn(2+). Residue Asp-251 is part of the active site. Substrate-binding residues include His-255 and Ala-267.

Belongs to the metallo-dependent hydrolases superfamily. DHOase family. Class II DHOase subfamily. Homodimer. The cofactor is Zn(2+).

The enzyme catalyses (S)-dihydroorotate + H2O = N-carbamoyl-L-aspartate + H(+). Its pathway is pyrimidine metabolism; UMP biosynthesis via de novo pathway; (S)-dihydroorotate from bicarbonate: step 3/3. Its function is as follows. Catalyzes the reversible cyclization of carbamoyl aspartate to dihydroorotate. This is Dihydroorotase from Salmonella dublin (strain CT_02021853).